Reading from the N-terminus, the 161-residue chain is Thy-1 membrane glycoprotein (161 aa).

Residues 1–19 (MNLAISIALLLTVLQVSRG) form the signal peptide. Position 20 is a pyrrolidone carboxylic acid (Gln-20). The Ig-like V-type domain occupies 20–126 (QKVTSLTACL…SQNVTVLRDK (107 aa)). Cystine bridges form between Cys-28/Cys-130 and Cys-38/Cys-104. N-linked (GlcNAc...) asparagine glycosylation is found at Asn-42 and Asn-79. Phosphoserine is present on Ser-82. The N-linked (GlcNAc...) asparagine glycan is linked to Asn-119. Cys-130 carries the GPI-anchor amidated cysteine; alternate lipid modification. The propeptide at 131–161 (EGISLLAQNTSWLLLLLLSLSLLQATDFMSL) is removed in mature form. An N-linked (GlcNAc...) asparagine glycan is attached at Asn-139.

It is found in the cell membrane. In terms of biological role, may play a role in cell-cell or cell-ligand interactions during synaptogenesis and other events in the brain. This chain is Thy-1 membrane glycoprotein (THY1), found in Homo sapiens (Human).